The chain runs to 273 residues: Tryptase (273 aa).

The signal sequence occupies residues 1–18; the sequence is MLKLLLLTLPLLSSLVHA. Residues 19-28 constitute a propeptide, activation peptide; that stretch reads APGPAMTREG. The Peptidase S1 domain maps to 29–270; the sequence is IVGGQEAHGN…YLDWIHHYVP (242 aa). An N-linked (GlcNAc...) asparagine glycan is attached at Asn49. The cysteines at positions 57 and 73 are disulfide-linked. Active-site charge relay system residues include His72 and Asp119. Asn130 is a glycosylation site (N-linked (GlcNAc...) asparagine). 3 disulfide bridges follow: Cys153-Cys228, Cys186-Cys209, and Cys218-Cys246. Ser222 (charge relay system) is an active-site residue.

It belongs to the peptidase S1 family. Tryptase subfamily.

The catalysed reaction is Preferential cleavage: Arg-|-Xaa, Lys-|-Xaa, but with more restricted specificity than trypsin.. Its function is as follows. Tryptase is the major neutral protease present in mast cells and is secreted upon the coupled activation-degranulation response of this cell type. May play a role in innate immunity. The polypeptide is Tryptase (Tpsab1) (Mus musculus (Mouse)).